Here is a 195-residue protein sequence, read N- to C-terminus: Segregation and condensation protein B (195 aa).

The protein belongs to the ScpB family. In terms of assembly, homodimer. Homodimerization may be required to stabilize the binding of ScpA to the Smc head domains. Component of a cohesin-like complex composed of ScpA, ScpB and the Smc homodimer, in which ScpA and ScpB bind to the head domain of Smc. The presence of the three proteins is required for the association of the complex with DNA.

It localises to the cytoplasm. Functionally, participates in chromosomal partition during cell division. May act via the formation of a condensin-like complex containing Smc and ScpA that pull DNA away from mid-cell into both cell halves. The chain is Segregation and condensation protein B from Clostridium perfringens (strain ATCC 13124 / DSM 756 / JCM 1290 / NCIMB 6125 / NCTC 8237 / Type A).